The sequence spans 228 residues: MAMLLQVALPLLAAVSWGWELNENDDSLAKIIEGCEWTSRQNVISEILLDRYRKYAMYNFFLLDDVCAVHEWNKNLKEPEFSENNEAEDKSPTSAQNTQEHIPGNNFPPPAASNPPVNSSCAKSAKDFFICLSNQLGDPTLNAMLLDNLEVACDPRFSPVSAIQKRNSKYVSKQKFYSWGGKRNNPNVFYPWGGKRNTGRVHRQPKVVIRNPFHAWGGKRNQKDDNVF.

Positions 1 to 18 (MAMLLQVALPLLAAVSWG) are cleaved as a signal peptide. Residues 19–164 (WELNENDDSL…PRFSPVSAIQ (146 aa)) constitute a propeptide that is removed on maturation. The segment at 80 to 118 (EFSENNEAEDKSPTSAQNTQEHIPGNNFPPPAASNPPVN) is disordered. Glycine 180 and glycine 193 each carry glycine amide. A propeptide spanning residues 197–209 (NTGRVHRQPKVVI) is cleaved from the precursor. Residue glycine 217 is modified to Glycine amide. Positions 221-228 (NQKDDNVF) are excised as a propeptide.

The protein resides in the secreted. Its function is as follows. Stimulates both fluid secretion by the Malpighian tubules and hindgut contractions. Depolarize the transepithelial voltage of the Malpighian tubules in concentrations of less than 10(-9) M and increase the frequency of hindgut contractions at concentrations above 10(-8) M. The protein is Leucokinins of Aedes aegypti (Yellowfever mosquito).